A 243-amino-acid polypeptide reads, in one-letter code: Ubiquinone/menaquinone biosynthesis C-methyltransferase UbiE (243 aa).

S-adenosyl-L-methionine-binding positions include threonine 69, aspartate 90, and aspartate 116 to alanine 117.

The protein belongs to the class I-like SAM-binding methyltransferase superfamily. MenG/UbiE family.

The enzyme catalyses a 2-demethylmenaquinol + S-adenosyl-L-methionine = a menaquinol + S-adenosyl-L-homocysteine + H(+). It catalyses the reaction a 2-methoxy-6-(all-trans-polyprenyl)benzene-1,4-diol + S-adenosyl-L-methionine = a 5-methoxy-2-methyl-3-(all-trans-polyprenyl)benzene-1,4-diol + S-adenosyl-L-homocysteine + H(+). It functions in the pathway quinol/quinone metabolism; menaquinone biosynthesis; menaquinol from 1,4-dihydroxy-2-naphthoate: step 2/2. Its pathway is cofactor biosynthesis; ubiquinone biosynthesis. In terms of biological role, methyltransferase required for the conversion of demethylmenaquinol (DMKH2) to menaquinol (MKH2) and the conversion of 2-polyprenyl-6-methoxy-1,4-benzoquinol (DDMQH2) to 2-polyprenyl-3-methyl-6-methoxy-1,4-benzoquinol (DMQH2). The polypeptide is Ubiquinone/menaquinone biosynthesis C-methyltransferase UbiE (Ralstonia pickettii (strain 12J)).